The sequence spans 375 residues: 23S rRNA (uracil(747)-C(5))-methyltransferase RlmC (375 aa).

Positions 3, 11, 14, and 87 each coordinate [4Fe-4S] cluster. S-adenosyl-L-methionine-binding residues include Q212, F241, E262, and N307. C334 functions as the Nucleophile in the catalytic mechanism.

It belongs to the class I-like SAM-binding methyltransferase superfamily. RNA M5U methyltransferase family. RlmC subfamily.

It catalyses the reaction uridine(747) in 23S rRNA + S-adenosyl-L-methionine = 5-methyluridine(747) in 23S rRNA + S-adenosyl-L-homocysteine + H(+). Its function is as follows. Catalyzes the formation of 5-methyl-uridine at position 747 (m5U747) in 23S rRNA. The polypeptide is 23S rRNA (uracil(747)-C(5))-methyltransferase RlmC (Serratia proteamaculans (strain 568)).